Reading from the N-terminus, the 214-residue chain is Cytochrome b (214 aa).

The next 4 helical transmembrane spans lie at 31–51, 75–96, 111–131, and 176–196; these read FGSMLLSCLMIQIATGFFLAI, WIMQNTHAIGASLFFICIYIHI, WLSGTTLLIILMATAFFGYVL, and FFALHFILPFAIISLSSLHIL. 2 residues coordinate heme b: histidine 81 and histidine 95. Positions 180 and 194 each coordinate heme b. Histidine 199 serves as a coordination point for a ubiquinone.

The protein belongs to the cytochrome b family. In terms of assembly, the cytochrome bc1 complex contains 3 respiratory subunits (MT-CYB, CYC1 and UQCRFS1), 2 core proteins (UQCRC1 and UQCRC2) and probably 6 low-molecular weight proteins. Heme b is required as a cofactor.

It localises to the mitochondrion inner membrane. In terms of biological role, component of the ubiquinol-cytochrome c reductase complex (complex III or cytochrome b-c1 complex) that is part of the mitochondrial respiratory chain. The b-c1 complex mediates electron transfer from ubiquinol to cytochrome c. Contributes to the generation of a proton gradient across the mitochondrial membrane that is then used for ATP synthesis. The chain is Cytochrome b (MT-CYB) from Crotalus atrox (Western diamondback rattlesnake).